The primary structure comprises 265 residues: MALTKIFLILLLSLLGLYSETVKSQNCDCAPNLCCSQFGYCGTTADYCGSTCQSGPCRVGGPPTGAGLVGNIVTQIFFNNIINQAGNGCAGKSFYTRDSFINATNTFPSFANTVTRREIATMFAHFTYETGHFCYIEEINGASRVMCDQNNRQYPCAPAKSYHGRGPLLLSWNFNYGACGQSLGLDLLRQPELVSSNPVVAFRTALWFWMKSVRPVLNQGFGATIRAISGFDCDGRNLGGVNARIGYYRDYCGQLGLDPGANITC.

An N-terminal signal peptide occupies residues 1–24 (MALTKIFLILLLSLLGLYSETVKS). Residues 25 to 59 (QNCDCAPNLCCSQFGYCGTTADYCGSTCQSGPCRV) form the Chitin-binding type-1 domain. 4 cysteine pairs are disulfide-bonded: C27/C35, C29/C41, C34/C48, and C52/C57. The interval 67–265 (GLVGNIVTQI…GLDPGANITC (199 aa)) is catalytic. The N-linked (GlcNAc...) asparagine glycan is linked to N102. Catalysis depends on E129, which acts as the Proton donor. N-linked (GlcNAc...) asparagine glycosylation is present at N262.

Belongs to the glycosyl hydrolase 19 family. Chitinase class I subfamily.

The enzyme catalyses Random endo-hydrolysis of N-acetyl-beta-D-glucosaminide (1-&gt;4)-beta-linkages in chitin and chitodextrins.. The protein is Endochitinase At2g43580 of Arabidopsis thaliana (Mouse-ear cress).